Consider the following 961-residue polypeptide: Transcription factor MYB3R-4 (961 aa).

Positions 1–33 (MEAESSTPQERIPKLRHGRTSGPARRSTRGQWT) are disordered. HTH myb-type domains follow at residues 24-75 (ARRS…QKVL), 76-131 (NPEL…NPAI), and 132-182 (NKEA…KKKL). 3 DNA-binding regions (H-T-H motif) span residues 52–75 (WKKI…QKVL), 104–127 (WSTI…HNHL), and 155–178 (WAEL…HSSV). Disordered stretches follow at residues 390–457 (GHSV…LIIS) and 534–555 (RPHS…EDMG). Composition is skewed to polar residues over residues 391–405 (HSVS…NEFN) and 416–430 (SSAS…TKSP). Residues 431–444 (TQSSSSRFTATAAS) are compositionally biased toward low complexity. Over residues 534-554 (RPHSLPKHEPNMTNEQHHEDM) the composition is skewed to basic and acidic residues. Positions 612-619 (GKKTLVGA) match the Nuclear localization signal motif. The disordered stretch occupies residues 756 to 781 (NTGKPVLSTPGQSVTKAEKAQVSTPR). A compositionally biased stretch (polar residues) spans 764 to 781 (TPGQSVTKAEKAQVSTPR).

In terms of assembly, component of a DREAM-like complex which modulates a variety of developmentally regulated genes and of the mitotic genes in proliferating and differentiated cells. Associates with CDKA-1, RBR1 and E2FB, but not with E2FC, in proliferating cells, at early stages of leaves development. In terms of tissue distribution, expressed in roots, cotyledons and leaves, especially in vascular tissues, and in flowers.

The protein localises to the nucleus. Transcription factor that binds 5'-AACGG-3' motifs in gene promoters. Involved in the regulation of cytokinesis, probably via the activation of several G2/M phase-specific genes transcription (e.g. KNOLLE). Required for the maintenance of diploidy. Its function is as follows. Involved in transcription regulation during induced endoreduplication at the powdery mildew (e.g. G.orontii) infection site, thus promoting G.orontii growth and reproduction. In Arabidopsis thaliana (Mouse-ear cress), this protein is Transcription factor MYB3R-4.